Consider the following 261-residue polypeptide: Phosphate import ATP-binding protein PstB 1 (261 aa).

Positions 8 to 256 constitute an ABC transporter domain; sequence IKVNNLSFYY…PHDSRTREYV (249 aa). 40-47 lines the ATP pocket; that stretch reads GPSGCGKS.

Belongs to the ABC transporter superfamily. Phosphate importer (TC 3.A.1.7) family. As to quaternary structure, the complex is composed of two ATP-binding proteins (PstB), two transmembrane proteins (PstC and PstA) and a solute-binding protein (PstS).

The protein localises to the cell inner membrane. It catalyses the reaction phosphate(out) + ATP + H2O = ADP + 2 phosphate(in) + H(+). Functionally, part of the ABC transporter complex PstSACB involved in phosphate import. Responsible for energy coupling to the transport system. In Nostoc sp. (strain PCC 7120 / SAG 25.82 / UTEX 2576), this protein is Phosphate import ATP-binding protein PstB 1.